Consider the following 157-residue polypeptide: Large ribosomal subunit protein uL15 (157 aa).

Residues 1–13 show a composition bias toward basic and acidic residues; sequence MKLNDLRDKDGAT. Residues 1-39 are disordered; the sequence is MKLNDLRDKDGATHSKKRLGRGIGSGSGKTAGRGVKGQK. Residues 21–35 show a composition bias toward gly residues; sequence RGIGSGSGKTAGRGV.

It belongs to the universal ribosomal protein uL15 family. Part of the 50S ribosomal subunit.

Its function is as follows. Binds to the 23S rRNA. The protein is Large ribosomal subunit protein uL15 of Mesorhizobium japonicum (strain LMG 29417 / CECT 9101 / MAFF 303099) (Mesorhizobium loti (strain MAFF 303099)).